A 356-amino-acid polypeptide reads, in one-letter code: Phosphoribosyl pyrophosphate synthase-associated protein 1 (356 aa).

M1 bears the N-acetylmethionine mark. An N-acetylproline modification is found at N2. S177 and S215 each carry phosphoserine.

Belongs to the ribose-phosphate pyrophosphokinase family. As to quaternary structure, binds to PRPS1 and PRPS2. Ubiquitous.

Seems to play a negative regulatory role in 5-phosphoribose 1-diphosphate synthesis. This Homo sapiens (Human) protein is Phosphoribosyl pyrophosphate synthase-associated protein 1 (PRPSAP1).